Here is a 485-residue protein sequence, read N- to C-terminus: Probable cobyric acid synthase (485 aa).

Positions Glu250–Ile435 constitute a GATase cobBQ-type domain. Cys328 serves as the catalytic Nucleophile. His427 is an active-site residue.

The protein belongs to the CobB/CobQ family. CobQ subfamily.

The protein operates within cofactor biosynthesis; adenosylcobalamin biosynthesis. Catalyzes amidations at positions B, D, E, and G on adenosylcobyrinic A,C-diamide. NH(2) groups are provided by glutamine, and one molecule of ATP is hydrogenolyzed for each amidation. The polypeptide is Probable cobyric acid synthase (Methanosarcina mazei (strain ATCC BAA-159 / DSM 3647 / Goe1 / Go1 / JCM 11833 / OCM 88) (Methanosarcina frisia)).